We begin with the raw amino-acid sequence, 358 residues long: Peptide chain release factor 1 (358 aa).

At glutamine 233 the chain carries N5-methylglutamine.

Belongs to the prokaryotic/mitochondrial release factor family. Methylated by PrmC. Methylation increases the termination efficiency of RF1.

The protein resides in the cytoplasm. Peptide chain release factor 1 directs the termination of translation in response to the peptide chain termination codons UAG and UAA. The sequence is that of Peptide chain release factor 1 from Staphylococcus saprophyticus subsp. saprophyticus (strain ATCC 15305 / DSM 20229 / NCIMB 8711 / NCTC 7292 / S-41).